The primary structure comprises 92 residues: Small ribosomal subunit protein uS19c (92 aa).

Belongs to the universal ribosomal protein uS19 family.

The protein resides in the plastid. It localises to the chloroplast. Protein S19 forms a complex with S13 that binds strongly to the 16S ribosomal RNA. This Nicotiana tomentosiformis (Tobacco) protein is Small ribosomal subunit protein uS19c.